The sequence spans 211 residues: Wound-induced protein WIN2 (211 aa).

The first 25 residues, 1–25 (MVKLSCGPILLALVLCISLTSVANA), serve as a signal peptide directing secretion. Residues 26–68 (QQCGRQRGGALCGNNLCCSQFGWCGSTPEYCSPSQGCQSQCTG) enclose the Chitin-binding type-1 domain. Intrachain disulfides connect C28/C43, C37/C49, C42/C56, and C62/C66. One can recognise a Barwin domain in the interval 77-198 (GSAQNVRATY…VNYQFVNCGD (122 aa)).

This is Wound-induced protein WIN2 (WIN2) from Solanum tuberosum (Potato).